The chain runs to 267 residues: Tryptophan synthase alpha chain (267 aa).

Catalysis depends on proton acceptor residues Glu47 and Asp58.

The protein belongs to the TrpA family. In terms of assembly, tetramer of two alpha and two beta chains.

The catalysed reaction is (1S,2R)-1-C-(indol-3-yl)glycerol 3-phosphate + L-serine = D-glyceraldehyde 3-phosphate + L-tryptophan + H2O. It participates in amino-acid biosynthesis; L-tryptophan biosynthesis; L-tryptophan from chorismate: step 5/5. Functionally, the alpha subunit is responsible for the aldol cleavage of indoleglycerol phosphate to indole and glyceraldehyde 3-phosphate. The sequence is that of Tryptophan synthase alpha chain from Pelodictyon phaeoclathratiforme (strain DSM 5477 / BU-1).